A 382-amino-acid polypeptide reads, in one-letter code: UDP-4-amino-4-deoxy-L-arabinose--oxoglutarate aminotransferase (382 aa).

Lys-183 bears the N6-(pyridoxal phosphate)lysine mark.

This sequence belongs to the DegT/DnrJ/EryC1 family. ArnB subfamily. Homodimer. Requires pyridoxal 5'-phosphate as cofactor.

It carries out the reaction UDP-4-amino-4-deoxy-beta-L-arabinose + 2-oxoglutarate = UDP-beta-L-threo-pentopyranos-4-ulose + L-glutamate. The protein operates within nucleotide-sugar biosynthesis; UDP-4-deoxy-4-formamido-beta-L-arabinose biosynthesis; UDP-4-deoxy-4-formamido-beta-L-arabinose from UDP-alpha-D-glucuronate: step 2/3. Its pathway is bacterial outer membrane biogenesis; lipopolysaccharide biosynthesis. Catalyzes the conversion of UDP-4-keto-arabinose (UDP-Ara4O) to UDP-4-amino-4-deoxy-L-arabinose (UDP-L-Ara4N). The modified arabinose is attached to lipid A and is required for resistance to polymyxin and cationic antimicrobial peptides. This Pseudomonas syringae pv. syringae (strain B728a) protein is UDP-4-amino-4-deoxy-L-arabinose--oxoglutarate aminotransferase.